A 464-amino-acid polypeptide reads, in one-letter code: uncharacterized protein (464 aa).

The first 24 residues, 1 to 24 (MSRFVPRIIPFYLLLLVAGGTANA), serve as a signal peptide directing secretion.

The protein belongs to the intimin/invasin family.

Its subcellular location is the periplasm. This is an uncharacterized protein from Escherichia coli (strain K12).